Here is a 147-residue protein sequence, read N- to C-terminus: D-aminoacyl-tRNA deacylase (147 aa).

The short motif at 136–137 (GP) is the Gly-cisPro motif, important for rejection of L-amino acids element.

It belongs to the DTD family. In terms of assembly, homodimer.

The protein resides in the cytoplasm. The enzyme catalyses glycyl-tRNA(Ala) + H2O = tRNA(Ala) + glycine + H(+). It catalyses the reaction a D-aminoacyl-tRNA + H2O = a tRNA + a D-alpha-amino acid + H(+). Functionally, an aminoacyl-tRNA editing enzyme that deacylates mischarged D-aminoacyl-tRNAs. Also deacylates mischarged glycyl-tRNA(Ala), protecting cells against glycine mischarging by AlaRS. Acts via tRNA-based rather than protein-based catalysis; rejects L-amino acids rather than detecting D-amino acids in the active site. By recycling D-aminoacyl-tRNA to D-amino acids and free tRNA molecules, this enzyme counteracts the toxicity associated with the formation of D-aminoacyl-tRNA entities in vivo and helps enforce protein L-homochirality. The polypeptide is D-aminoacyl-tRNA deacylase (Streptococcus pneumoniae (strain P1031)).